The sequence spans 346 residues: Hexosaminidase D (346 aa).

E141 serves as the catalytic Proton donor.

It belongs to the glycosyl hydrolase 20 family. As to quaternary structure, homodimer; disulfide-linked.

The protein localises to the cytoplasm. The protein resides in the nucleus. Its subcellular location is the extracellular vesicle. The catalysed reaction is Hydrolysis of terminal non-reducing N-acetyl-D-hexosamine residues in N-acetyl-beta-D-hexosaminides.. With respect to regulation, inhibited by O-(2-acetamido-2-deoxy-D-glucopyranosylidene)amino N-phenylcarbamate (PUGNAc). Inhibited by galacto-NAG-thiazoline. Its function is as follows. Has hexosaminidase activity. Responsible for the cleavage of the monosaccharides N-acetylglucosamine (GlcNAc) and N-acetylgalactosamine (GalNAc) from cellular substrates. Has a preference for galactosaminide over glucosaminide substrates. The protein is Hexosaminidase D of Bos taurus (Bovine).